The primary structure comprises 439 residues: RNA polymerase II-associated protein RBA50 (439 aa).

2 disordered regions span residues 1–35 (MDLL…GFPE) and 49–79 (LREK…SEAK). Residues 15–30 (SVESNDNGTLSTNNCG) show a composition bias toward polar residues.

It belongs to the RPAP1 family.

Its subcellular location is the cytoplasm. Its function is as follows. Forms an interface between the RNA polymerase II enzyme and chaperone/scaffolding proteins, suggesting that it is required to connect RNA polymerase II to regulators of protein complex formation. The chain is RNA polymerase II-associated protein RBA50 (RBA50) from Saccharomyces cerevisiae (strain ATCC 204508 / S288c) (Baker's yeast).